A 70-amino-acid chain; its full sequence is uncharacterized protein (70 aa).

A helical membrane pass occupies residues 15–37 (IFAFLLFRLCKFCCVFCCALCNV).

It localises to the membrane. This is an uncharacterized protein from Dictyostelium discoideum (Social amoeba).